The chain runs to 281 residues: BEN domain-containing protein 6 (281 aa).

2 disordered regions span residues 15–62 (VLRK…ETPL) and 143–172 (SFAS…PGEK). Residues 19-99 (RKRKRTETAN…RLRQSLVMLQ (81 aa)) adopt a coiled-coil conformation. The span at 143–160 (SFASLCSNSNSTSSSPSS) shows a compositional bias: low complexity. Over residues 162–172 (KAEEEQHPGEK) the composition is skewed to basic and acidic residues. Residues 171–271 (EKQFTIERWQ…NCTKKPNASK (101 aa)) enclose the BEN domain.

Interacts (via BEN domain) with RBPJ.

The protein resides in the nucleus. Acts as a corepressor of recombining binding protein suppressor hairless (RBPJ) and inhibits Notch signaling in neural stem cells, thereby opposing their self-renewal and promoting neurogenesis. This chain is BEN domain-containing protein 6 (Bend6), found in Mus musculus (Mouse).